Here is a 295-residue protein sequence, read N- to C-terminus: G1/S-specific cyclin-D1 (295 aa).

The Cyclin N-terminal domain maps to 28–152 (LRAMLKAEET…LLVNKLKWNL (125 aa)). A disordered region spans residues 264–295 (QQSLDPKAAEEEEEEEEADLACTPTDVRDVNI). Lysine 270 participates in a covalent cross-link: Glycyl lysine isopeptide (Lys-Gly) (interchain with G-Cter in ubiquitin). Positions 273–282 (EEEEEEEEAD) are enriched in acidic residues. Phosphothreonine is present on threonine 286.

Belongs to the cyclin family. Cyclin D subfamily. As to quaternary structure, interacts with either CDK4 or CDK6 protein kinase to form a serine/threonine kinase holoenzyme complex. The cyclin subunit imparts substrate specificity to the complex. Component of the ternary complex CCND1/CDK4/CDKN1B required for nuclear translocation and modulation of CDK4-mediated kinase activity. Interacts directly with CDKN1B. Can form similar complexes with either CDKN1A or CDKN2A. Interacts with UHRF2; the interaction ubiquitinates CCND1 and appears to occur independently of phosphorylation. Interacts with USP2. Interacts (via cyclin N-terminal domain) with INSM1 (via N-terminal region); the interaction competes with the binding of CCND1 to CDK4 during cell cycle progression and inhibits CDK4 activity. Interacts with CDK4; the interaction is prevented with the binding of CCND1 to INSM1 during cell cycle progression. In terms of processing, phosphorylation at Thr-286 by MAP kinases is required for ubiquitination and degradation by the DCX(AMBRA1) complex. It also plays an essential role for recognition by the FBXO31 component of SCF (SKP1-cullin-F-box) protein ligase complex following DNA damage. Post-translationally, ubiquitinated at Lys-270 by the DCX(AMBRA1) complex during the transition from G1 to S cell phase, leading to its degradation: ubiquitination is dependent on Thr-286 phosphorylation. The DCX(AMBRA1) complex represents the major regulator of CCND1 stability during the G1/S transition. Also ubiquitinated by the SCF(FBXO4) and Cul7-RING(FBXW8) ubiquitin-protein ligase complexes. Following DNA damage it is ubiquitinated by the SCF(FBXO31) protein ligase complex. SCF(FBXO31) ubiquitination is dependent on Thr-286 phosphorylation. Ubiquitinated also by UHRF2 apparently in a phosphorylation-independent manner. Ubiquitination leads to its degradation and G1 arrest. Deubiquitinated by USP2; leading to its stabilization.

It localises to the nucleus. The protein resides in the cytoplasm. Its subcellular location is the nucleus membrane. In terms of biological role, regulatory component of the cyclin D1-CDK4 (DC) complex that phosphorylates and inhibits members of the retinoblastoma (RB) protein family including RB1 and regulates the cell-cycle during G(1)/S transition. Phosphorylation of RB1 allows dissociation of the transcription factor E2F from the RB/E2F complex and the subsequent transcription of E2F target genes which are responsible for the progression through the G(1) phase. Hypophosphorylates RB1 in early G(1) phase. Cyclin D-CDK4 complexes are major integrators of various mitogenenic and antimitogenic signals. Also a substrate for SMAD3, phosphorylating SMAD3 in a cell-cycle-dependent manner and repressing its transcriptional activity. Component of the ternary complex, cyclin D1/CDK4/CDKN1B, required for nuclear translocation and activity of the cyclin D-CDK4 complex. Exhibits transcriptional corepressor activity with INSM1 on the NEUROD1 and INS promoters in a cell cycle-independent manner. This Canis lupus familiaris (Dog) protein is G1/S-specific cyclin-D1 (CCND1).